Consider the following 379-residue polypeptide: Thiosulfate/3-mercaptopyruvate sulfurtransferase 1, mitochondrial (379 aa).

Residues 1 to 56 (MASTLFSRTFLAASHRLITPSLPQKIFNPATFLSRSLHSQLGSASTAYKSTTWARR) constitute a mitochondrion transit peptide. Ala-57 carries the post-translational modification N-acetylalanine. Rhodanese domains are found at residues 91 to 208 (REPD…DVES) and 259 to 373 (EDPT…LPIE). Cys-333 functions as the Cysteine persulfide intermediate in the catalytic mechanism.

In terms of tissue distribution, expressed in roots, rosette and cauline leaves, stems, flowers and siliques.

Its subcellular location is the mitochondrion. It carries out the reaction thiosulfate + hydrogen cyanide = thiocyanate + sulfite + 2 H(+). The enzyme catalyses 2-oxo-3-sulfanylpropanoate + [thioredoxin]-dithiol = [thioredoxin]-disulfide + hydrogen sulfide + pyruvate + H(+). In terms of biological role, catalyzes the transfer of a sulfur ion from a donor to cyanide or to other thiol compounds. Substrate preference is 3-mercaptopyruvate &gt; thiosulfate. Involved in embryo and seed development. The sequence is that of Thiosulfate/3-mercaptopyruvate sulfurtransferase 1, mitochondrial (STR1) from Arabidopsis thaliana (Mouse-ear cress).